Consider the following 168-residue polypeptide: Probable prefoldin subunit 5 (168 aa).

This sequence belongs to the prefoldin subunit alpha family. As to quaternary structure, heterohexamer of two PFD-alpha type and four PFD-beta type subunits.

Binds specifically to cytosolic chaperonin (c-CPN) and transfers target proteins to it. Binds to nascent polypeptide chain and promotes folding in an environment in which there are many competing pathways for nonnative proteins. This Drosophila melanogaster (Fruit fly) protein is Probable prefoldin subunit 5.